The following is a 279-amino-acid chain: Putative pyruvate, phosphate dikinase regulatory protein (279 aa).

Position 153-160 (153-160 (GVSRTSKT)) interacts with ADP.

Belongs to the pyruvate, phosphate/water dikinase regulatory protein family. PDRP subfamily.

The enzyme catalyses N(tele)-phospho-L-histidyl/L-threonyl-[pyruvate, phosphate dikinase] + ADP = N(tele)-phospho-L-histidyl/O-phospho-L-threonyl-[pyruvate, phosphate dikinase] + AMP + H(+). The catalysed reaction is N(tele)-phospho-L-histidyl/O-phospho-L-threonyl-[pyruvate, phosphate dikinase] + phosphate + H(+) = N(tele)-phospho-L-histidyl/L-threonyl-[pyruvate, phosphate dikinase] + diphosphate. Its function is as follows. Bifunctional serine/threonine kinase and phosphorylase involved in the regulation of the pyruvate, phosphate dikinase (PPDK) by catalyzing its phosphorylation/dephosphorylation. The sequence is that of Putative pyruvate, phosphate dikinase regulatory protein from Rhodopseudomonas palustris (strain HaA2).